Consider the following 557-residue polypeptide: Aerobic glycerol-3-phosphate dehydrogenase (557 aa).

21–49 is an FAD binding site; sequence DVVIIGGGITGAGIALDASERGMKVALVE.

It belongs to the FAD-dependent glycerol-3-phosphate dehydrogenase family. It depends on FAD as a cofactor.

It localises to the cytoplasm. The catalysed reaction is a quinone + sn-glycerol 3-phosphate = dihydroxyacetone phosphate + a quinol. The protein operates within polyol metabolism; glycerol degradation via glycerol kinase pathway; glycerone phosphate from sn-glycerol 3-phosphate (aerobic route): step 1/1. In Staphylococcus saprophyticus subsp. saprophyticus (strain ATCC 15305 / DSM 20229 / NCIMB 8711 / NCTC 7292 / S-41), this protein is Aerobic glycerol-3-phosphate dehydrogenase (glpD).